The primary structure comprises 108 residues: Cytochrome c (108 aa).

Heme c-binding residues include C19, C22, H23, and M85.

Belongs to the cytochrome c family. Binds 1 heme c group covalently per subunit.

The protein localises to the mitochondrion intermembrane space. Its function is as follows. Electron carrier protein. The oxidized form of the cytochrome c heme group can accept an electron from the heme group of the cytochrome c1 subunit of cytochrome reductase. Cytochrome c then transfers this electron to the cytochrome oxidase complex, the final protein carrier in the mitochondrial electron-transport chain. This is Cytochrome c from Cochliobolus lunatus (Filamentous fungus).